A 132-amino-acid polypeptide reads, in one-letter code: Small ribosomal subunit protein uS8 (132 aa).

Belongs to the universal ribosomal protein uS8 family. Part of the 30S ribosomal subunit. Contacts proteins S5 and S12.

In terms of biological role, one of the primary rRNA binding proteins, it binds directly to 16S rRNA central domain where it helps coordinate assembly of the platform of the 30S subunit. This Anaeromyxobacter dehalogenans (strain 2CP-C) protein is Small ribosomal subunit protein uS8.